Here is a 354-residue protein sequence, read N- to C-terminus: Polyprenal reductase 1 (354 aa).

Helical transmembrane passes span 11–31, 78–98, 141–158, 176–196, 235–255, and 301–321; these read PLLCLAWIATTLPIIVAALPI, FMHFYVVGVLATTILLLAIWF, YHVWRTVFVLLLMEIQVL, MHIVGYLTGLFYYVAAPLSLA, PLLKLGWTQWIGAVIFIWGSL, and GMLVASGGEDIPVWFLFVFVI.

The protein belongs to the steroid 5-alpha reductase family. Polyprenal reductase subfamily.

The protein localises to the cell membrane. The catalysed reaction is a di-trans,poly-cis-dolichal + NADP(+) = a di-trans,poly-cis-polyprenal + NADPH + H(+). It participates in protein modification; protein glycosylation. In terms of biological role, plays a key role in early steps of protein N-linked glycosylation by being involved in the conversion of polyprenol into dolichol. Acts as a polyprenal reductase that mediates the reduction of polyprenal into dolichal in a NADP-dependent mechanism. Dolichols are required for the synthesis of dolichol-linked monosaccharides and the oligosaccharide precursor used for N-glycosylation. The protein is Polyprenal reductase 1 of Oryza sativa subsp. indica (Rice).